The following is a 453-amino-acid chain: Cyclic GMP-AMP phosphodiesterase SMPDL3A (453 aa).

Residues 1–22 (MALVRALVCCLLTAWHCRSGLG) form the signal peptide. Positions 45 and 47 each coordinate Zn(2+). Cys-62 and Cys-81 are disulfide-bonded. N-linked (GlcNAc...) asparagine glycosylation occurs at Asn-69. A Zn(2+)-binding site is contributed by Asp-110. Residue His-114 coordinates ATP. The N-linked (GlcNAc...) asparagine glycan is linked to Asn-131. Asn-151 serves as a coordination point for Zn(2+). Asn-151 and His-152 together coordinate ATP. Residues Asn-222 and Asn-238 are each glycosylated (N-linked (GlcNAc...) asparagine). Position 252 (His-252) interacts with Zn(2+). Asn-263 is a glycosylation site (N-linked (GlcNAc...) asparagine). His-293 and His-295 together coordinate Zn(2+). Asn-356 carries an N-linked (GlcNAc...) asparagine glycan. Intrachain disulfides connect Cys-420/Cys-424 and Cys-430/Cys-443. N-linked (GlcNAc...) asparagine glycosylation occurs at Asn-437.

The protein belongs to the acid sphingomyelinase family. In terms of assembly, monomer. Homodimer; homodimerizes following 2',3'-cGAMP-binding. Zn(2+) serves as cofactor. In terms of processing, N-glycosylation is required for protein maturation, secretion and phosphodiesterase activity. Detected in blood serum. Detected in macrophages (at protein level).

Its subcellular location is the secreted. It carries out the reaction 2',3'-cGAMP + H2O = 5'-pGpA(2'-5') + H(+). The enzyme catalyses 5'-pGpA(2'-5') + H2O = 5'-GpA(2'-5') + phosphate. It catalyses the reaction a ribonucleoside 5'-triphosphate + H2O = a ribonucleoside 5'-diphosphate + phosphate + H(+). The catalysed reaction is ATP + H2O = ADP + phosphate + H(+). With respect to regulation, requires micromolar levels of Zn(2+) for activity. Inhibited by millimolar levels of Zn(2+). In terms of biological role, cyclic-nucleotide phosphodiesterase that acts as a negative regulator of innate immunity by mediating degradation of 2',3'-cGAMP, thereby inhibiting the cGAS-STING signaling. Specifically linearizes 2',3'-cGAMP into 2'5'-bond pGpA and further hydrolyzes pGpA to produce GpA. Also has in vitro nucleotide phosphodiesterase activity with nucleoside triphosphates, such as ATP. Has in vitro activity with p-nitrophenyl-TMP. Has lower activity with nucleoside diphosphates, and no activity with nucleoside monophosphates. Has in vitro activity with CDP-choline, giving rise to CMP and phosphocholine. Has in vitro activity with CDP-ethanolamine. Does not have sphingomyelin phosphodiesterase activity. This Homo sapiens (Human) protein is Cyclic GMP-AMP phosphodiesterase SMPDL3A.